The chain runs to 420 residues: Serine hydroxymethyltransferase (420 aa).

Residues Leu121 and 125 to 127 (GHL) contribute to the (6S)-5,6,7,8-tetrahydrofolate site. An N6-(pyridoxal phosphate)lysine modification is found at Lys229. 355–357 (SPF) provides a ligand contact to (6S)-5,6,7,8-tetrahydrofolate.

Belongs to the SHMT family. As to quaternary structure, homodimer. The cofactor is pyridoxal 5'-phosphate.

The protein resides in the cytoplasm. It catalyses the reaction (6R)-5,10-methylene-5,6,7,8-tetrahydrofolate + glycine + H2O = (6S)-5,6,7,8-tetrahydrofolate + L-serine. Its pathway is one-carbon metabolism; tetrahydrofolate interconversion. The protein operates within amino-acid biosynthesis; glycine biosynthesis; glycine from L-serine: step 1/1. Catalyzes the reversible interconversion of serine and glycine with tetrahydrofolate (THF) serving as the one-carbon carrier. This reaction serves as the major source of one-carbon groups required for the biosynthesis of purines, thymidylate, methionine, and other important biomolecules. Also exhibits THF-independent aldolase activity toward beta-hydroxyamino acids, producing glycine and aldehydes, via a retro-aldol mechanism. The sequence is that of Serine hydroxymethyltransferase from Chromohalobacter salexigens (strain ATCC BAA-138 / DSM 3043 / CIP 106854 / NCIMB 13768 / 1H11).